Consider the following 555-residue polypeptide: MGDAAVPAMVVEEEEQEHVFRSRFPPVAVPDGVTVPEFVLDGAEAYADRVALVEAAAGGRSYTYGEVARDTARFARALRSVGVRKGHVVVVALPNLAVYPVVSLGIMSAGAVFSGVNPRALAAEIKKQVEDSEAKLVVANEVAFDKVKDAGVPVIGVGDRERMPGAISWDGLLAAADRTGAGVVPVDAAQQSDLCALPYSSGTTGVSKGVMLSHRNLVSNLCSSMFAVAPETAGQVVTLGLMPFFHIYGITGICCATLRHKGTVVVMDRFDLRTFLRALVDHRVMFAPLVPPVMLAMVKSPVADEFDLSDLALKSVMTAAAPLAPDLLAAFQRKFPGVQVEEAYGLTEHSCITLTHAAGDGHGHVAKKSSVGFILPNLEVKFVDPDTGRSLPANTPGELCVRSQSVMQGYYKRKEETERTVDGKGWLHTGDVGYIDGDGDVFIVDRIKELIKYKGFQVAPAELEAVLLSHPSVEDAAVFGVPDEEAGEVPVACVVRRHGAEEGEEEIVAYVAERVASYKRVRVLHIVDAIPKSVSGKILRRQLRDEFIKRMKPSA.

Residues Ser200, Ser201, Gly202, Thr203, Thr204, and Lys208 each coordinate ATP. Residue Tyr248 coordinates (E)-4-coumaroyl-AMP. Position 269 (Arg269) interacts with CoA. An SBD1 region spans residues Asp271 to Glu342. Residue Ala320 participates in (E)-4-coumaroyl-AMP binding. The ATP site is built by Glu342, Ala343, Thr347, Asp431, and Arg446. (E)-4-coumaroyl-AMP-binding residues include Ala343 and Thr347. The segment at Ala343–Tyr410 is SBD2. Residues Lys448 and Lys452 each coordinate (E)-4-coumaroyl-AMP. Lys454 and Gly455 together coordinate CoA. Position 537 (Lys537) interacts with ATP.

This sequence belongs to the ATP-dependent AMP-binding enzyme family. Interacts with STS1. Mg(2+) is required as a cofactor.

The enzyme catalyses (E)-4-coumarate + ATP + CoA = (E)-4-coumaroyl-CoA + AMP + diphosphate. It carries out the reaction (E)-4-coumarate + ATP + H(+) = (E)-4-coumaroyl-AMP + diphosphate. The catalysed reaction is (E)-4-coumaroyl-AMP + CoA = (E)-4-coumaroyl-CoA + AMP + H(+). Carboxylate--CoA ligase that may use 4-coumarate as substrate. Follows a two-step reaction mechanism, wherein the carboxylate substrate first undergoes adenylation by ATP, followed by a thioesterification in the presence of CoA to yield the final CoA thioester. The chain is 4-coumarate--CoA ligase-like 9 (4CLL9) from Oryza sativa subsp. japonica (Rice).